A 270-amino-acid chain; its full sequence is Phosphatidylglycerol--prolipoprotein diacylglyceryl transferase (270 aa).

Transmembrane regions (helical) follow at residues 10–30 (VAVAIGPLQIHWYGLMYLVGI), 56–76 (LIFWLAMGVIVGGRLGYVLFY), 92–112 (WKGGMAFHGGFVGVMIAAWWF), 120–140 (FFQLMDFVAPLVPIGLGAGRI), 175–195 (SQLYQFALEGVALFIILNLYA), 202–222 (MAVSGMFALFYGIFRFVVEFV), and 237–257 (VTMGQILSLPMIIAGLFLIWL). An a 1,2-diacyl-sn-glycero-3-phospho-(1'-sn-glycerol)-binding site is contributed by Arg139.

It belongs to the Lgt family.

The protein localises to the cell inner membrane. The catalysed reaction is L-cysteinyl-[prolipoprotein] + a 1,2-diacyl-sn-glycero-3-phospho-(1'-sn-glycerol) = an S-1,2-diacyl-sn-glyceryl-L-cysteinyl-[prolipoprotein] + sn-glycerol 1-phosphate + H(+). It functions in the pathway protein modification; lipoprotein biosynthesis (diacylglyceryl transfer). Catalyzes the transfer of the diacylglyceryl group from phosphatidylglycerol to the sulfhydryl group of the N-terminal cysteine of a prolipoprotein, the first step in the formation of mature lipoproteins. In Pseudomonas savastanoi pv. phaseolicola (strain 1448A / Race 6) (Pseudomonas syringae pv. phaseolicola (strain 1448A / Race 6)), this protein is Phosphatidylglycerol--prolipoprotein diacylglyceryl transferase.